We begin with the raw amino-acid sequence, 313 residues long: Protein MFI (313 aa).

In terms of assembly, can homodimerize. Interacts with MFF; the interaction inhibits MFF interaction with DNM1L. As to expression, enriched in the pancreatic beta cell and the testis and is expressed at low levels in other tissues tested.

The protein resides in the cytoplasm. It is found in the cytosol. The protein localises to the mitochondrion outer membrane. Acts as an inhibitor of mitochondrial fission. Interacts with MFF and prevents DNM1L recruitment to mitochondria, promoting a more fused mitochondrial network. This Homo sapiens (Human) protein is Protein MFI.